Consider the following 732-residue polypeptide: 1,4-alpha-glucan branching enzyme GlgB 1 (732 aa).

The active-site Nucleophile is aspartate 411. The active-site Proton donor is glutamate 464.

Belongs to the glycosyl hydrolase 13 family. GlgB subfamily. Monomer.

It catalyses the reaction Transfers a segment of a (1-&gt;4)-alpha-D-glucan chain to a primary hydroxy group in a similar glucan chain.. It participates in glycan biosynthesis; glycogen biosynthesis. Catalyzes the formation of the alpha-1,6-glucosidic linkages in glycogen by scission of a 1,4-alpha-linked oligosaccharide from growing alpha-1,4-glucan chains and the subsequent attachment of the oligosaccharide to the alpha-1,6 position. The sequence is that of 1,4-alpha-glucan branching enzyme GlgB 1 from Xanthomonas oryzae pv. oryzae (strain KACC10331 / KXO85).